A 102-amino-acid chain; its full sequence is Small ribosomal subunit protein bS18 (102 aa).

This sequence belongs to the bacterial ribosomal protein bS18 family. Part of the 30S ribosomal subunit. Forms a tight heterodimer with protein bS6.

Functionally, binds as a heterodimer with protein bS6 to the central domain of the 16S rRNA, where it helps stabilize the platform of the 30S subunit. The protein is Small ribosomal subunit protein bS18 of Orientia tsutsugamushi (strain Boryong) (Rickettsia tsutsugamushi).